The sequence spans 80 residues: UPF0248 protein YG5714_2801 (80 aa).

Belongs to the UPF0248 family.

The sequence is that of UPF0248 protein YG5714_2801 from Saccharolobus islandicus (strain Y.G.57.14 / Yellowstone #1) (Sulfolobus islandicus).